A 524-amino-acid polypeptide reads, in one-letter code: GMP synthase [glutamine-hydrolyzing] (524 aa).

The Glutamine amidotransferase type-1 domain maps to 10–199 (PVLVVDFGAQ…LTEVAGLEQT (190 aa)). Cysteine 87 serves as the catalytic Nucleophile. Catalysis depends on residues histidine 173 and glutamate 175. In terms of domain architecture, GMPS ATP-PPase spans 200–398 (WTSANIAQQL…LGLPEEIVAR (199 aa)). 228–234 (SGGVDSA) serves as a coordination point for ATP.

Homodimer.

It carries out the reaction XMP + L-glutamine + ATP + H2O = GMP + L-glutamate + AMP + diphosphate + 2 H(+). It functions in the pathway purine metabolism; GMP biosynthesis; GMP from XMP (L-Gln route): step 1/1. Functionally, catalyzes the synthesis of GMP from XMP. In Corynebacterium ammoniagenes (Brevibacterium ammoniagenes), this protein is GMP synthase [glutamine-hydrolyzing] (guaA).